We begin with the raw amino-acid sequence, 607 residues long: Cyclic-di-GMP receptor FimW (607 aa).

The interval Glu323–Ile492 is pilZ-like domain. An RXXXR motif motif is present at residues Arg324–Arg328. The short motif at Asn435–Gly440 is the D/NXSXXG motif element. Positions Ser568 to Ser582 are enriched in polar residues. The disordered stretch occupies residues Ser568–Leu607.

Monomer in the absence of c-di-GMP. Forms dimers in the presence of c-di-GMP.

The protein resides in the cytoplasm. Functionally, high-affinity cyclic-di-GMP binding protein that regulates type IV pili (T4P) elongation. Required for T4P-mediated surface attachment and walking motility during the early phases of surface colonization. Not required for twitching motility. Does not bind related nucleotides such as GMP, GDP, GTP or ATP. The polypeptide is Cyclic-di-GMP receptor FimW (Pseudomonas aeruginosa (strain ATCC 15692 / DSM 22644 / CIP 104116 / JCM 14847 / LMG 12228 / 1C / PRS 101 / PAO1)).